A 234-amino-acid polypeptide reads, in one-letter code: Triosephosphate isomerase (234 aa).

8–10 (NFK) is a substrate binding site. H90 (electrophile) is an active-site residue. Catalysis depends on E159, which acts as the Proton acceptor. G165 and S197 together coordinate substrate.

The protein belongs to the triosephosphate isomerase family. As to quaternary structure, homodimer.

The protein resides in the cytoplasm. The enzyme catalyses D-glyceraldehyde 3-phosphate = dihydroxyacetone phosphate. It participates in carbohydrate biosynthesis; gluconeogenesis. Its pathway is carbohydrate degradation; glycolysis; D-glyceraldehyde 3-phosphate from glycerone phosphate: step 1/1. Its function is as follows. Involved in the gluconeogenesis. Catalyzes stereospecifically the conversion of dihydroxyacetone phosphate (DHAP) to D-glyceraldehyde-3-phosphate (G3P). The protein is Triosephosphate isomerase of Helicobacter pylori (strain P12).